Here is a 237-residue protein sequence, read N- to C-terminus: Phosphatidylserine decarboxylase proenzyme (237 aa).

The Schiff-base intermediate with substrate; via pyruvic acid role is filled by Ser-206. Ser-206 is subject to Pyruvic acid (Ser); by autocatalysis.

Belongs to the phosphatidylserine decarboxylase family. PSD-A subfamily. As to quaternary structure, heterodimer of a large membrane-associated beta subunit and a small pyruvoyl-containing alpha subunit. It depends on pyruvate as a cofactor. Is synthesized initially as an inactive proenzyme. Formation of the active enzyme involves a self-maturation process in which the active site pyruvoyl group is generated from an internal serine residue via an autocatalytic post-translational modification. Two non-identical subunits are generated from the proenzyme in this reaction, and the pyruvate is formed at the N-terminus of the alpha chain, which is derived from the carboxyl end of the proenzyme. The post-translation cleavage follows an unusual pathway, termed non-hydrolytic serinolysis, in which the side chain hydroxyl group of the serine supplies its oxygen atom to form the C-terminus of the beta chain, while the remainder of the serine residue undergoes an oxidative deamination to produce ammonia and the pyruvoyl prosthetic group on the alpha chain.

It localises to the cell membrane. The enzyme catalyses a 1,2-diacyl-sn-glycero-3-phospho-L-serine + H(+) = a 1,2-diacyl-sn-glycero-3-phosphoethanolamine + CO2. It functions in the pathway phospholipid metabolism; phosphatidylethanolamine biosynthesis; phosphatidylethanolamine from CDP-diacylglycerol: step 2/2. Its function is as follows. Catalyzes the formation of phosphatidylethanolamine (PtdEtn) from phosphatidylserine (PtdSer). This chain is Phosphatidylserine decarboxylase proenzyme, found in Rhodococcus erythropolis (strain PR4 / NBRC 100887).